The following is a 138-amino-acid chain: Ribosome-binding factor A (138 aa).

The disordered stretch occupies residues 112 to 138; it reads EARTQGQEPAADVEPAPGAAPDDEAEE. Positions 119-131 are enriched in low complexity; it reads EPAADVEPAPGAA.

This sequence belongs to the RbfA family. In terms of assembly, monomer. Binds 30S ribosomal subunits, but not 50S ribosomal subunits or 70S ribosomes.

The protein localises to the cytoplasm. One of several proteins that assist in the late maturation steps of the functional core of the 30S ribosomal subunit. Associates with free 30S ribosomal subunits (but not with 30S subunits that are part of 70S ribosomes or polysomes). Required for efficient processing of 16S rRNA. May interact with the 5'-terminal helix region of 16S rRNA. This is Ribosome-binding factor A from Anaeromyxobacter dehalogenans (strain 2CP-C).